A 950-amino-acid chain; its full sequence is Protocadherin alpha-6 (950 aa).

The signal sequence occupies residues 1–29 (MVFTPEDRLGKQCLLLPLLLLAAWKVGSG). At 30-697 (QLHYSVPEEA…GPEAALVDVN (668 aa)) the chain is on the extracellular side. Cadherin domains follow at residues 34 to 133 (SVPE…PPLF), 157 to 242 (ASDA…APNF), 243 to 350 (EQSE…VPEI), 351 to 455 (ALTS…APAF), 456 to 565 (AQPE…APAL), and 581 to 678 (VPRS…APKA). Residues N257, N265, N386, and N548 are each glycosylated (N-linked (GlcNAc...) asparagine). A helical membrane pass occupies residues 698–718 (VYLIIAICAVSSLLVLTLLLY). Residues 719–950 (TALRCSAPST…GNSTTDNSDQ (232 aa)) are Cytoplasmic-facing. PXXP repeat units follow at residues 799–802 (PRQP), 832–835 (PGGP), 873–876 (PGNP), and 891–894 (PGSP). The segment at 799–894 (PRQPNPDWRY…PDKFIIPGSP (96 aa)) is 4 X 4 AA repeats of P-X-X-P. A disordered region spans residues 830–889 (AGPGGPDQQWPTVSSATPEPEAGEVSPPVGAGVNSNSWTFKYGPGNPKQSGPGELPDKFI). Residues 901-950 (QEPANSQIDKSDFITFGKKEETKKKKKKKKGNKTQEKKEKGNSTTDNSDQ) are disordered. The segment covering 909 to 923 (DKSDFITFGKKEETK) has biased composition (basic and acidic residues).

The protein localises to the cell membrane. Functionally, potential calcium-dependent cell-adhesion protein. May be involved in the establishment and maintenance of specific neuronal connections in the brain. This Pan troglodytes (Chimpanzee) protein is Protocadherin alpha-6 (PCDHA6).